A 75-amino-acid chain; its full sequence is Cytochrome c oxidase assembly factor 5 (75 aa).

Residues 28 to 66 (QTDCVLQEGKSPKECLKEGYCKALQVTFFECKRSILDTR) form the CHCH domain. The Cx10C motif signature appears at 31–42 (CVLQEGKSPKEC). 2 cysteine pairs are disulfide-bonded: C31–C58 and C42–C48. Residues 48–58 (CKALQVTFFEC) carry the Cx9C motif motif.

This sequence belongs to the PET191 family.

Involved in an early step of the mitochondrial complex IV assembly process. This is Cytochrome c oxidase assembly factor 5 (coa5) from Xenopus tropicalis (Western clawed frog).